We begin with the raw amino-acid sequence, 346 residues long: Dihydroorotate dehydrogenase (quinone) (346 aa).

FMN contacts are provided by residues 61 to 65 and Thr-85; that span reads AGLDK. Lys-65 is a substrate binding site. 110–114 is a substrate binding site; sequence NRMGF. Residues Asn-138 and Asn-171 each contribute to the FMN site. Asn-171 serves as a coordination point for substrate. Ser-174 acts as the Nucleophile in catalysis. Residue Asn-176 participates in substrate binding. Residues Lys-216 and Thr-244 each contribute to the FMN site. A substrate-binding site is contributed by 245 to 246; the sequence is NT. FMN contacts are provided by residues Gly-267, Gly-296, and 317–318; that span reads YS.

Belongs to the dihydroorotate dehydrogenase family. Type 2 subfamily. In terms of assembly, monomer. Requires FMN as cofactor.

It is found in the cell membrane. The enzyme catalyses (S)-dihydroorotate + a quinone = orotate + a quinol. The protein operates within pyrimidine metabolism; UMP biosynthesis via de novo pathway; orotate from (S)-dihydroorotate (quinone route): step 1/1. Functionally, catalyzes the conversion of dihydroorotate to orotate with quinone as electron acceptor. The sequence is that of Dihydroorotate dehydrogenase (quinone) from Marinomonas sp. (strain MWYL1).